The primary structure comprises 324 residues: Hydroxyacylglutathione hydrolase 2, mitochondrial (324 aa).

A mitochondrion-targeting transit peptide spans 1–64 (MQTISKASSA…KSIRVSKFCS (64 aa)). The Zn(2+) site is built by H124 and H126. Residues D128 and H129 each coordinate Fe cation. Residues H182 and D201 each coordinate Zn(2+). Fe cation-binding residues include D201 and H239.

This sequence belongs to the metallo-beta-lactamase superfamily. Glyoxalase II family. Monomer. Fe(3+) serves as cofactor. The cofactor is Fe(2+). Zn(2+) is required as a cofactor.

It is found in the mitochondrion. The catalysed reaction is an S-(2-hydroxyacyl)glutathione + H2O = a 2-hydroxy carboxylate + glutathione + H(+). It participates in secondary metabolite metabolism; methylglyoxal degradation; (R)-lactate from methylglyoxal: step 2/2. Thiolesterase that catalyzes the hydrolysis of S-D-lactoyl-glutathione to form glutathione and D-lactic acid. This Arabidopsis thaliana (Mouse-ear cress) protein is Hydroxyacylglutathione hydrolase 2, mitochondrial.